The primary structure comprises 257 residues: 4-hydroxy-tetrahydrodipicolinate reductase (257 aa).

7–12 (GCLGRM) contacts NAD(+). Residue arginine 34 coordinates NADP(+). Residues 96-98 (GTT) and 117-120 (SCNM) each bind NAD(+). Histidine 149 functions as the Proton donor/acceptor in the catalytic mechanism. Residue histidine 150 coordinates (S)-2,3,4,5-tetrahydrodipicolinate. Lysine 153 (proton donor) is an active-site residue. (S)-2,3,4,5-tetrahydrodipicolinate is bound at residue 159–160 (GT).

Belongs to the DapB family.

It localises to the cytoplasm. The catalysed reaction is (S)-2,3,4,5-tetrahydrodipicolinate + NAD(+) + H2O = (2S,4S)-4-hydroxy-2,3,4,5-tetrahydrodipicolinate + NADH + H(+). The enzyme catalyses (S)-2,3,4,5-tetrahydrodipicolinate + NADP(+) + H2O = (2S,4S)-4-hydroxy-2,3,4,5-tetrahydrodipicolinate + NADPH + H(+). Its pathway is amino-acid biosynthesis; L-lysine biosynthesis via DAP pathway; (S)-tetrahydrodipicolinate from L-aspartate: step 4/4. Functionally, catalyzes the conversion of 4-hydroxy-tetrahydrodipicolinate (HTPA) to tetrahydrodipicolinate. This Anaplasma marginale (strain St. Maries) protein is 4-hydroxy-tetrahydrodipicolinate reductase.